Consider the following 663-residue polypeptide: LEAF RUST 10 DISEASE-RESISTANCE LOCUS RECEPTOR-LIKE PROTEIN KINASE-like 1.4 (663 aa).

An N-terminal signal peptide occupies residues 1 to 25 (MYYPLSSSLMFFILFSLFYHLPCES). The Extracellular portion of the chain corresponds to 26–241 (SKCESLFQCG…TSLSIGAKAG (216 aa)). Residues Asn-36, Asn-64, Asn-106, Asn-137, and Asn-208 are each glycosylated (N-linked (GlcNAc...) asparagine). The helical transmembrane segment at 242–262 (IAVASVSGLAILLLAGLFLCI) threads the bilayer. The Cytoplasmic segment spans residues 263–663 (RRRRKTQDAQ…TSSSDTAASL (401 aa)). A disordered region spans residues 282–304 (SYSSRDTSRNPTSTTISSSSNHS). Residues 290–304 (RNPTSTTISSSSNHS) are compositionally biased toward low complexity. In terms of domain architecture, Protein kinase spans 334-609 (ENFSRELGDG…DEIVEILRGI (276 aa)). Residues 340-348 (LGDGGFGTV) and Lys-362 each bind ATP. The active-site Proton acceptor is the Asp-458. Positions 637 to 663 (LLRNSVPPPISPETDKWTSSSDTAASL) are disordered. Residues 653 to 663 (WTSSSDTAASL) show a composition bias toward polar residues.

Belongs to the protein kinase superfamily. Ser/Thr protein kinase family.

It localises to the cell membrane. The enzyme catalyses L-seryl-[protein] + ATP = O-phospho-L-seryl-[protein] + ADP + H(+). It catalyses the reaction L-threonyl-[protein] + ATP = O-phospho-L-threonyl-[protein] + ADP + H(+). This is LEAF RUST 10 DISEASE-RESISTANCE LOCUS RECEPTOR-LIKE PROTEIN KINASE-like 1.4 from Arabidopsis thaliana (Mouse-ear cress).